We begin with the raw amino-acid sequence, 247 residues long: Chloride intracellular channel protein 2 (247 aa).

The N-terminal stretch occupies residues 1-94 (MSGLRPGTQV…KIEEFLEQTL (94 aa)). Residues 1-96 (MSGLRPGTQV…EEFLEQTLAP (96 aa)) are required for insertion into the membrane. Glutamate 25 is a binding site for glutathione. The G-site motif lies at 30-33 (CPFC). Cysteine 30 and cysteine 33 are disulfide-bonded. A helical transmembrane segment spans residues 32–52 (FCQRLFMILWLKGVKFNVTTV). The GST C-terminal domain occupies 76–239 (NKELKTDFIK…PEDKEIENTY (164 aa)). The tract at residues 95-106 (APPRYPHLSPKY) is joint loop. Residues 107 to 247 (KESFDVGCNL…TYANVAKQKS (141 aa)) are C-terminal. Residues 151 to 171 (NTPLLDEIDPDSAEEPPVSRR) form a foot loop region. Residue histidine 227 coordinates glutathione.

It belongs to the chloride channel CLIC family. Monomer. Interacts with TRAPPC2 and RYR2. As to expression, expressed in adult and fetal brain, heart, skeletal muscle, liver, lung, and spleen. Detected in adult stomach and testis. Expressed in fetal thymus and kidney.

The protein localises to the cytoplasm. It localises to the membrane. The enzyme catalyses chloride(in) = chloride(out). It carries out the reaction tert-butyl hydroperoxide + 2 glutathione = tert-butanol + glutathione disulfide + H2O. The catalysed reaction is cumene hydroperoxide + 2 glutathione = 2-phenylpropan-2-ol + glutathione disulfide + H2O. Its activity is regulated as follows. The channel conductance is regulated by pH. In the soluble state, catalyzes glutaredoxin-like thiol disulfide exchange reactions with reduced glutathione as electron donor. Displays weak glutathione peroxidase activity. Can insert into membranes and form chloride ion channels. Membrane insertion seems to be redox-regulated and may occur only under oxidizing conditions. Modulates the activity of RYR2 and inhibits calcium influx. In Homo sapiens (Human), this protein is Chloride intracellular channel protein 2.